The primary structure comprises 126 residues: Small ribosomal subunit protein uS13 (126 aa).

The disordered stretch occupies residues 96 to 126 (LPVHGQRTHTNARTRKGPRRAIAGKKKAGKK).

Belongs to the universal ribosomal protein uS13 family. As to quaternary structure, part of the 30S ribosomal subunit. Forms a loose heterodimer with protein S19. Forms two bridges to the 50S subunit in the 70S ribosome.

Located at the top of the head of the 30S subunit, it contacts several helices of the 16S rRNA. In the 70S ribosome it contacts the 23S rRNA (bridge B1a) and protein L5 of the 50S subunit (bridge B1b), connecting the 2 subunits; these bridges are implicated in subunit movement. Contacts the tRNAs in the A and P-sites. The sequence is that of Small ribosomal subunit protein uS13 from Frankia alni (strain DSM 45986 / CECT 9034 / ACN14a).